A 132-amino-acid chain; its full sequence is Translation initiation factor 5A (132 aa).

Lys-37 is subject to Hypusine.

The protein belongs to the eIF-5A family.

It is found in the cytoplasm. Functionally, functions by promoting the formation of the first peptide bond. This chain is Translation initiation factor 5A (eif5a), found in Methanocaldococcus jannaschii (strain ATCC 43067 / DSM 2661 / JAL-1 / JCM 10045 / NBRC 100440) (Methanococcus jannaschii).